Reading from the N-terminus, the 294-residue chain is Golgi to ER traffic protein 2 (294 aa).

The interval 1 to 104 (MSSELSETEK…QATSPQETID (104 aa)) is disordered. Topologically, residues 1-166 (MSSELSETEK…LDYNNYLINN (166 aa)) are cytoplasmic. Basic residues predominate over residues 12-21 (KLIRERRQKK). Residues 34 to 65 (ITGQAENSQLDTESPLDSKSSRETTPTVTKVD) show a composition bias toward polar residues. Residues 85–95 (KVEKSQKKKEQ) show a composition bias toward basic and acidic residues. A helical membrane pass occupies residues 167 to 187 (LKVWSIIFKWCFFLIPYLFAL). The Lumenal portion of the chain corresponds to 188 to 205 (TRSEPISFLPEQFSNPSN). Residues 206–225 (FFMIFLSFEIVATSIYFQKL) traverse the membrane as a helical segment. Over 226-272 (QNIEKSNKINGFQSNNKIVNLVSLIPEGVLPVPDIKGKVIMALQYWD) the chain is Cytoplasmic. The chain crosses the membrane as a helical span at residues 273 to 293 (VFSMFLTDICFVLVMMGLFKL). Residue Ile294 is a topological domain, lumenal.

Belongs to the GET2 family. In terms of assembly, component of the Golgi to ER traffic (GET) complex, which is composed of GET1, GET2 and GET3. Within the complex, GET1 and GET2 form a heterotetramer which is stabilized by phosphatidylinositol binding and which binds to the GET3 homodimer.

Its subcellular location is the endoplasmic reticulum membrane. The protein resides in the golgi apparatus membrane. Its function is as follows. Required for the post-translational delivery of tail-anchored (TA) proteins to the endoplasmic reticulum. Together with GET1, acts as a membrane receptor for soluble GET3, which recognizes and selectively binds the transmembrane domain of TA proteins in the cytosol. The GET complex cooperates with the HDEL receptor ERD2 to mediate the ATP-dependent retrieval of resident ER proteins that contain a C-terminal H-D-E-L retention signal from the Golgi to the ER. In Vanderwaltozyma polyspora (strain ATCC 22028 / DSM 70294 / BCRC 21397 / CBS 2163 / NBRC 10782 / NRRL Y-8283 / UCD 57-17) (Kluyveromyces polysporus), this protein is Golgi to ER traffic protein 2.